Consider the following 446-residue polypeptide: Probable arogenate/prephenate dehydrogenase (446 aa).

The region spanning 6 to 288 (LTISIIGGTD…SEAKRGAYYS (283 aa)) is the Prephenate/arogenate dehydrogenase domain.

The protein in the N-terminal section; belongs to the prephenate/arogenate dehydrogenase family.

The polypeptide is Probable arogenate/prephenate dehydrogenase (Methanocaldococcus jannaschii (strain ATCC 43067 / DSM 2661 / JAL-1 / JCM 10045 / NBRC 100440) (Methanococcus jannaschii)).